The chain runs to 124 residues: Sulfiredoxin (124 aa).

Belongs to the sulfiredoxin family. Interacts with tpx1 in response to oxidative stress.

The protein resides in the cytoplasm. Its subcellular location is the nucleus. It carries out the reaction S-hydroxy-S-oxy-L-cysteinyl-[peroxiredoxin] + [protein]-dithiol + ATP = S-hydroxy-L-cysteinyl-[peroxiredoxin] + [protein]-disulfide + ADP + phosphate. Its function is as follows. Contributes to oxidative stress resistance by reducing cysteine-sulfinic acid formed under exposure to oxidants in a peroxiredoxin. May catalyze the reduction in a multi-step process by acting both as a specific phosphotransferase and a thioltransferase. In Schizosaccharomyces pombe (strain 972 / ATCC 24843) (Fission yeast), this protein is Sulfiredoxin (srx1).